The sequence spans 223 residues: Peroxynitrite isomerase 1 (223 aa).

The GXWXGXG motif lies at 69-75 (GVWRGEG). Positions 186 and 213 each coordinate heme b.

The protein belongs to the nitrobindin family. In terms of assembly, homodimer. Heme b is required as a cofactor.

The catalysed reaction is peroxynitrite = nitrate. The protein operates within nitrogen metabolism. Its function is as follows. Heme-binding protein able to scavenge peroxynitrite and to protect free L-tyrosine against peroxynitrite-mediated nitration, by acting as a peroxynitrite isomerase that converts peroxynitrite to nitrate. Therefore, this protein likely plays a role in peroxynitrite sensing and in the detoxification of reactive nitrogen and oxygen species (RNS and ROS, respectively). Is able to bind nitric oxide (NO) in vitro, but may act as a sensor of peroxynitrite levels in vivo. This Mycobacterium marinum (strain ATCC BAA-535 / M) protein is Peroxynitrite isomerase 1.